The following is a 195-amino-acid chain: Ribonuclease HII (195 aa).

Residues 1–195 form the RNase H type-2 domain; that stretch reads MICGIDEAGR…SWRTLRYLNT (195 aa). A divalent metal cation contacts are provided by D6, E7, and D101.

It belongs to the RNase HII family. It depends on Mn(2+) as a cofactor. Requires Mg(2+) as cofactor.

It is found in the cytoplasm. It carries out the reaction Endonucleolytic cleavage to 5'-phosphomonoester.. Functionally, endonuclease that specifically degrades the RNA of RNA-DNA hybrids. The polypeptide is Ribonuclease HII (Pyrobaculum islandicum (strain DSM 4184 / JCM 9189 / GEO3)).